We begin with the raw amino-acid sequence, 752 residues long: Pre-mRNA-processing factor 39 (752 aa).

Positions 1 to 148 are disordered; it reads MEDSGESMTG…DPAAPQEPEL (148 aa). A compositionally biased stretch (polar residues) spans 28 to 42; that stretch reads TTGTDDVTGLSTSDL. Low complexity-rich tracts occupy residues 43–56, 76–94, and 133–148; these read TTEQ…QTQP, QSAS…PPES, and EPAA…EPEL. HAT repeat units follow at residues 180 to 212, 214 to 246, and 254 to 289; these read NHLL…IERK, GYIQ…FLRE, and EAES…WETE. A disordered region spans residues 347-374; sequence NKPSGDEDAETEAPGEELPPGTEDLPDP. Over residues 352-361 the composition is skewed to acidic residues; sequence DEDAETEAPG. 2 HAT repeats span residues 408–440 and 442–474; these read AFEE…FELE and GTPE…YLES. The segment covering 678 to 699 has biased composition (basic and acidic residues); it reads SFKRKAENGSEEPDAKRQRTDD. A disordered region spans residues 678 to 703; it reads SFKRKAENGSEEPDAKRQRTDDQSVA. An HAT 6 repeat occupies 700-731; sequence QSVASGQMMDMQANHAGYNYNNWYQYNSWGSQ.

The protein belongs to the PRP39 family.

It is found in the nucleus. Involved in pre-mRNA splicing. The polypeptide is Pre-mRNA-processing factor 39 (prpf39) (Danio rerio (Zebrafish)).